A 173-amino-acid polypeptide reads, in one-letter code: MAIILGIDPGSRVTGYGVIRQVGRQLSYLGSGCIRTKVDDLPSRLKLIYAGVTEIITQFQPDYFAIEQVFMAKNADSALKLGQARGVAIVAATNQALPVFEYAARQVKQTVVGIGSAEKSQVQHMVRTLLKLPANPQADAADALAIAITHCHVSQNAAQISETRLNLARGRLR.

Catalysis depends on residues D8, E67, and D139. Positions 8, 67, and 139 each coordinate Mg(2+).

Belongs to the RuvC family. In terms of assembly, homodimer which binds Holliday junction (HJ) DNA. The HJ becomes 2-fold symmetrical on binding to RuvC with unstacked arms; it has a different conformation from HJ DNA in complex with RuvA. In the full resolvosome a probable DNA-RuvA(4)-RuvB(12)-RuvC(2) complex forms which resolves the HJ. Requires Mg(2+) as cofactor.

The protein resides in the cytoplasm. The catalysed reaction is Endonucleolytic cleavage at a junction such as a reciprocal single-stranded crossover between two homologous DNA duplexes (Holliday junction).. Functionally, the RuvA-RuvB-RuvC complex processes Holliday junction (HJ) DNA during genetic recombination and DNA repair. Endonuclease that resolves HJ intermediates. Cleaves cruciform DNA by making single-stranded nicks across the HJ at symmetrical positions within the homologous arms, yielding a 5'-phosphate and a 3'-hydroxyl group; requires a central core of homology in the junction. The consensus cleavage sequence is 5'-(A/T)TT(C/G)-3'. Cleavage occurs on the 3'-side of the TT dinucleotide at the point of strand exchange. HJ branch migration catalyzed by RuvA-RuvB allows RuvC to scan DNA until it finds its consensus sequence, where it cleaves and resolves the cruciform DNA. In Klebsiella pneumoniae subsp. pneumoniae (strain ATCC 700721 / MGH 78578), this protein is Crossover junction endodeoxyribonuclease RuvC.